The following is a 1379-amino-acid chain: ABC multidrug transporter MDR2 (1379 aa).

The helical transmembrane segment at 65-85 (IALIVIGTIAGIGAGIPFPLL) threads the bilayer. Residues 69-367 (VIGTIAGIGA…MAPFMHIFAS (299 aa)) form the ABC transmembrane type-1 1 domain. A glycan (N-linked (GlcNAc...) asparagine) is linked at Asn97. 5 consecutive transmembrane segments (helical) span residues 119-139 (VLQVIYVSILNFVCMYIHTGC), 193-213 (KVGLFIGTISYFVAAYIVAFL), 215-235 (VATIAAMLMSVVPIYFLMAFG), 301-321 (IQFGMLYFVAYASNALAFWQG), and 336-356 (VSVGAVYTVIFVLLDASFVLS). One can recognise an ABC transporter 1 domain in the interval 403 to 682 (IELQDVTFNY…DGVYAGMVRL (280 aa)). Residue 438–445 (GTSGSGKS) participates in ATP binding. 2 N-linked (GlcNAc...) asparagine glycosylation sites follow: Asn552 and Asn633. Residues 738–758 (YMPEEADSLPTEPENEKEKPK) form a disordered region. The next 4 helical transmembrane spans lie at 781–801 (LGLITSIMIGVSYTGEAVIFG), 820–840 (GMLFGLLFFILAIVKFAAVIV), 881–901 (LLVALVTSDASALSSLTGTTI), and 920–942 (VIAWKIAVVLLATLPVLLASGVL). Residues 781–1068 (LGLITSIMIG…MFALVPDISK (288 aa)) enclose the ABC transmembrane type-1 2 domain. N-linked (GlcNAc...) asparagine glycosylation occurs at Asn989. The next 2 membrane-spanning stretches (helical) occupy residues 1008 to 1028 (FWLSLAYSISTLVYALAYWWG) and 1032 to 1052 (ILAGMYTQVQFFIVLPALLFS). Positions 1135 to 1374 (VQFRNVHFRY…CESYRANVIH (240 aa)) constitute an ABC transporter 2 domain. 1170–1177 (GPSGSGKS) lines the ATP pocket.

The protein belongs to the ABC transporter superfamily. ABCB family. Multidrug resistance exporter (TC 3.A.1.201) subfamily.

Its subcellular location is the cell membrane. Functionally, pleiotropic ABC efflux transporter that may be involved in the modulation susceptibility to a wide range of unrelated cytotoxic compounds. The protein is ABC multidrug transporter MDR2 of Trichophyton interdigitale (strain MR816).